The sequence spans 524 residues: Cytochrome P450 1A1 (524 aa).

The tract at residues 33–44 (LRTQVPKGLKTP) is mitochondrial targeting signal. O-linked (GlcNAc) serine glycosylation occurs at Ser71. Phe228 provides a ligand contact to substrate. Cys461 contacts heme.

Belongs to the cytochrome P450 family. As to quaternary structure, interacts with cytosolic chaperones HSP70 and HSP90; this interaction is required for initial targeting to mitochondria. Interacts (via mitochondrial targeting signal) with TOMM40 (via N-terminus); this interaction is required for translocation across the mitochondrial outer membrane. Requires heme as cofactor.

The protein resides in the endoplasmic reticulum membrane. Its subcellular location is the mitochondrion inner membrane. The protein localises to the microsome membrane. It is found in the cytoplasm. The enzyme catalyses an organic molecule + reduced [NADPH--hemoprotein reductase] + O2 = an alcohol + oxidized [NADPH--hemoprotein reductase] + H2O + H(+). It catalyses the reaction estrone + reduced [NADPH--hemoprotein reductase] + O2 = 2-hydroxyestrone + oxidized [NADPH--hemoprotein reductase] + H2O + H(+). The catalysed reaction is estrone + reduced [NADPH--hemoprotein reductase] + O2 = 4-hydroxyestrone + oxidized [NADPH--hemoprotein reductase] + H2O + H(+). It carries out the reaction estrone + reduced [NADPH--hemoprotein reductase] + O2 = 6alpha-hydroxyestrone + oxidized [NADPH--hemoprotein reductase] + H2O + H(+). The enzyme catalyses estrone + reduced [NADPH--hemoprotein reductase] + O2 = 15alpha-hydroxyestrone + oxidized [NADPH--hemoprotein reductase] + H2O + H(+). It catalyses the reaction estrone + reduced [NADPH--hemoprotein reductase] + O2 = 16alpha-hydroxyestrone + oxidized [NADPH--hemoprotein reductase] + H2O + H(+). The catalysed reaction is 17beta-estradiol + reduced [NADPH--hemoprotein reductase] + O2 = 2-hydroxy-17beta-estradiol + oxidized [NADPH--hemoprotein reductase] + H2O + H(+). It carries out the reaction 17beta-estradiol + reduced [NADPH--hemoprotein reductase] + O2 = 4-hydroxy-17beta-estradiol + oxidized [NADPH--hemoprotein reductase] + H2O + H(+). The enzyme catalyses 17beta-estradiol + reduced [NADPH--hemoprotein reductase] + O2 = 6alpha-hydroxy-17beta-estradiol + oxidized [NADPH--hemoprotein reductase] + H2O + H(+). It catalyses the reaction 17beta-estradiol + reduced [NADPH--hemoprotein reductase] + O2 = 7alpha-hydroxy-17beta-estradiol + oxidized [NADPH--hemoprotein reductase] + H2O + H(+). The catalysed reaction is 17beta-estradiol + reduced [NADPH--hemoprotein reductase] + O2 = 15alpha-hydroxy-17beta-estradiol + oxidized [NADPH--hemoprotein reductase] + H2O + H(+). It carries out the reaction (5Z,8Z,11Z)-eicosatrienoate + reduced [NADPH--hemoprotein reductase] + O2 = 19-hydroxy-(5Z,8Z,11Z)-eicosatrienoate + oxidized [NADPH--hemoprotein reductase] + H2O + H(+). The enzyme catalyses (5Z,8Z,11Z,14Z)-eicosatetraenoate + reduced [NADPH--hemoprotein reductase] + O2 = 16-hydroxy-(5Z,8Z,11Z,14Z)-eicosatetraenoate + oxidized [NADPH--hemoprotein reductase] + H2O + H(+). It catalyses the reaction (5Z,8Z,11Z,14Z)-eicosatetraenoate + reduced [NADPH--hemoprotein reductase] + O2 = 17-hydroxy-(5Z,8Z,11Z,14Z)-eicosatetraenoate + oxidized [NADPH--hemoprotein reductase] + H2O + H(+). The catalysed reaction is (5Z,8Z,11Z,14Z)-eicosatetraenoate + reduced [NADPH--hemoprotein reductase] + O2 = 18-hydroxy-(5Z,8Z,11Z,14Z)-eicosatetraenoate + oxidized [NADPH--hemoprotein reductase] + H2O + H(+). It carries out the reaction (5Z,8Z,11Z,14Z)-eicosatetraenoate + reduced [NADPH--hemoprotein reductase] + O2 = 19-hydroxy-(5Z,8Z,11Z,14Z)-eicosatetraenoate + oxidized [NADPH--hemoprotein reductase] + H2O + H(+). The enzyme catalyses (5Z,8Z,11Z,14Z,17Z)-eicosapentaenoate + reduced [NADPH--hemoprotein reductase] + O2 = 19-hydroxy-(5Z,8Z,11Z,14Z,17Z)-eicosapentaenoate + oxidized [NADPH--hemoprotein reductase] + H2O + H(+). It catalyses the reaction (5Z,8Z,11Z,14Z)-eicosatetraenoate + reduced [NADPH--hemoprotein reductase] + O2 = (8R,9S)-epoxy-(5Z,11Z,14Z)-eicosatrienoate + oxidized [NADPH--hemoprotein reductase] + H2O + H(+). The catalysed reaction is (5Z,8Z,11Z,14Z)-eicosatetraenoate + reduced [NADPH--hemoprotein reductase] + O2 = (11R,12S)-epoxy-(5Z,8Z,14Z)-eicosatrienoate + oxidized [NADPH--hemoprotein reductase] + H2O + H(+). It carries out the reaction (5Z,8Z,11Z,14Z)-eicosatetraenoate + reduced [NADPH--hemoprotein reductase] + O2 = (14S,15R)-epoxy-(5Z,8Z,11Z)-eicosatrienoate + oxidized [NADPH--hemoprotein reductase] + H2O + H(+). The enzyme catalyses (5Z,8Z,11Z,14Z)-eicosatetraenoate + reduced [NADPH--hemoprotein reductase] + O2 = (14R,15S)-epoxy-(5Z,8Z,11Z)-eicosatrienoate + oxidized [NADPH--hemoprotein reductase] + H2O + H(+). It catalyses the reaction (5Z,8Z,11Z,14Z,17Z)-eicosapentaenoate + reduced [NADPH--hemoprotein reductase] + O2 = (17R,18S)-epoxy-(5Z,8Z,11Z,14Z)-eicosatetraenoate + oxidized [NADPH--hemoprotein reductase] + H2O + H(+). The catalysed reaction is (4Z,7Z,10Z,13Z,16Z,19Z)-docosahexaenoate + reduced [NADPH--hemoprotein reductase] + O2 = (19S,20R)-epoxy-(4Z,7Z,10Z,13Z,16Z)-docosapentaenoate + oxidized [NADPH--hemoprotein reductase] + H2O + H(+). It carries out the reaction (4Z,7Z,10Z,13Z,16Z,19Z)-docosahexaenoate + reduced [NADPH--hemoprotein reductase] + O2 = (19R,20S)-epoxy-(4Z,7Z,10Z,13Z,16Z)-docosapentaenoate + oxidized [NADPH--hemoprotein reductase] + H2O + H(+). The enzyme catalyses all-trans-retinol + reduced [NADPH--hemoprotein reductase] + O2 = all-trans-retinal + oxidized [NADPH--hemoprotein reductase] + 2 H2O + H(+). It catalyses the reaction all-trans-retinal + reduced [NADPH--hemoprotein reductase] + O2 = all-trans-retinoate + oxidized [NADPH--hemoprotein reductase] + H2O + 2 H(+). The catalysed reaction is (13S)-hydroperoxy-(9Z,11E)-octadecadienoate = 13-oxo-(9Z,11E)-octadecadienoate + H2O. It carries out the reaction (12S)-hydroperoxy-(5Z,8Z,10E,14Z)-eicosatetraenoate = 12-oxo-(5Z,8Z,10E,14Z)-eicosatetraenoate + H2O. The enzyme catalyses (15S)-hydroperoxy-(5Z,8Z,11Z,13E)-eicosatetraenoate = 15-oxo-(5Z,8Z,11Z,13E)-eicosatetraenoate + H2O. It catalyses the reaction (5S)-hydroperoxy-(6E,8Z,11Z,14Z)-eicosatetraenoate = 5-oxo-(6E,8Z,11Z,14Z)-eicosatetraenoate + H2O. The protein operates within steroid hormone biosynthesis. It participates in lipid metabolism; fatty acid metabolism. Its pathway is cofactor metabolism; retinol metabolism. In terms of biological role, a cytochrome P450 monooxygenase involved in the metabolism of various endogenous substrates, including fatty acids, steroid hormones and vitamins. Mechanistically, uses molecular oxygen inserting one oxygen atom into a substrate, and reducing the second into a water molecule, with two electrons provided by NADPH via cytochrome P450 reductase (CPR; NADPH-ferrihemoprotein reductase). Catalyzes the hydroxylation of carbon-hydrogen bonds. Exhibits high catalytic activity for the formation of hydroxyestrogens from estrone (E1) and 17beta-estradiol (E2), namely 2-hydroxy E1 and E2, as well as D-ring hydroxylated E1 and E2 at the C15alpha and C16alpha positions. Displays different regioselectivities for polyunsaturated fatty acids (PUFA) hydroxylation. Catalyzes the epoxidation of double bonds of certain PUFA. Converts arachidonic acid toward epoxyeicosatrienoic acid (EET) regioisomers, 8,9-, 11,12-, and 14,15-EET, that function as lipid mediators in the vascular system. Displays an absolute stereoselectivity in the epoxidation of eicosapentaenoic acid (EPA) producing the 17(R),18(S) enantiomer. May play an important role in all-trans retinoic acid biosynthesis in extrahepatic tissues. Catalyzes two successive oxidative transformation of all-trans retinol to all-trans retinal and then to the active form all-trans retinoic acid. May also participate in eicosanoids metabolism by converting hydroperoxide species into oxo metabolites (lipoxygenase-like reaction, NADPH-independent). The protein is Cytochrome P450 1A1 (CYP1A1) of Mesocricetus auratus (Golden hamster).